A 714-amino-acid chain; its full sequence is MEMASAFTLNVRLDNIAIITIDVPDEKMNTLKAEFASQVRAIIKQLRENKELRGVVFISAKPDNFIAGADINMIGNCKTAQEAEALARQGQQLMAEIHALPIPVIAAIHGACLGGGLELALACHGRVCTDDPKTVLGLPEVQLGLLPGSGGTQRLPRLIGVSTALEMILTGKQLRAKQALKLGLVDDVVPHSILLEAAVELAKKDRPSSRPLPVRERILAGPLGRALLFKMVGKKTEHKTQGNYPATERILEVVETGLAQGTSSGYDAEARAFGELAMTPQSQALRSIFFASTDVKKDPGSDAPPAPLNSVGILGGGLMGAGIAYVTACKAGLPVRIKDINPQGINHALKYSWDQLEGKVRRRHLKASERDKQLALISGTTDYRGFAHRDLIIEAVFENLELKQQMVAEVEQNCAAHTIFASNTSSLPIGDIAAHAARPEQVIGLHFFSPVEKMPLVEIIPHAGTSAQTIATTVKLAKKQGKTPIVVRDKAGFYVNRILAPYINEAIRMLTEGERVEHIDAALVKFGFPVGPIQLLDEVGIDTGTKIIPVLEAAYGERFSAPANVVSSILNDDRKGRKNGRGFYLYGQKGRKSKKQVDPAIYPLIGAQGQGRLSAPQVAERCVMLMLNEAVRCVDEQVIRSVRDGDIGAVFGIGFPPFLGGPFRYIDSLGAGEVVAIMQRLATQYGSRFTPCERLVEMGARGESFWKTTATDLQ.

Positions 1 to 190 are enoyl-CoA hydratase; that stretch reads MEMASAFTLN…KLGLVDDVVP (190 aa). The tract at residues 306–714 is 3-hydroxyacyl-CoA dehydrogenase; that stretch reads APLNSVGILG…FWKTTATDLQ (409 aa).

In the N-terminal section; belongs to the enoyl-CoA hydratase/isomerase family. It in the central section; belongs to the 3-hydroxyacyl-CoA dehydrogenase family. Heterotetramer of two alpha chains (FadJ) and two beta chains (FadI).

Its subcellular location is the cytoplasm. The catalysed reaction is a (3S)-3-hydroxyacyl-CoA = a (2E)-enoyl-CoA + H2O. The enzyme catalyses a 4-saturated-(3S)-3-hydroxyacyl-CoA = a (3E)-enoyl-CoA + H2O. It carries out the reaction a (3S)-3-hydroxyacyl-CoA + NAD(+) = a 3-oxoacyl-CoA + NADH + H(+). It catalyses the reaction (3S)-3-hydroxybutanoyl-CoA = (3R)-3-hydroxybutanoyl-CoA. It participates in lipid metabolism; fatty acid beta-oxidation. Its function is as follows. Catalyzes the formation of a hydroxyacyl-CoA by addition of water on enoyl-CoA. Also exhibits 3-hydroxyacyl-CoA epimerase and 3-hydroxyacyl-CoA dehydrogenase activities. This chain is Fatty acid oxidation complex subunit alpha, found in Escherichia coli O9:H4 (strain HS).